Consider the following 472-residue polypeptide: Glutamate synthase [NADPH] small chain (472 aa).

A 4Fe-4S ferredoxin-type domain is found at 41 to 72 (QDAAAQAHRCLHCGNPYCEWKCPVHNYIPNWL). 4 residues coordinate [4Fe-4S] cluster: Cys-50, Cys-53, Cys-58, and Cys-62.

The cofactor is [4Fe-4S] cluster.

It carries out the reaction 2 L-glutamate + NADP(+) = L-glutamine + 2-oxoglutarate + NADPH + H(+). It participates in amino-acid biosynthesis; L-glutamate biosynthesis via GLT pathway; L-glutamate from 2-oxoglutarate and L-glutamine (NADP(+) route): step 1/1. It functions in the pathway energy metabolism; nitrogen metabolism. In terms of biological role, catalyzes the conversion of L-glutamine and 2-oxoglutarate into two molecules of L-glutamate. This Halomonas elongata (strain ATCC 33173 / DSM 2581 / NBRC 15536 / NCIMB 2198 / 1H9) protein is Glutamate synthase [NADPH] small chain.